A 417-amino-acid chain; its full sequence is Serine hydroxymethyltransferase (417 aa).

Residues L120 and 124–126 (GHL) each bind (6S)-5,6,7,8-tetrahydrofolate. K229 carries the N6-(pyridoxal phosphate)lysine modification. A (6S)-5,6,7,8-tetrahydrofolate-binding site is contributed by 354-356 (SPF).

This sequence belongs to the SHMT family. As to quaternary structure, homodimer. Pyridoxal 5'-phosphate is required as a cofactor.

It is found in the cytoplasm. The catalysed reaction is (6R)-5,10-methylene-5,6,7,8-tetrahydrofolate + glycine + H2O = (6S)-5,6,7,8-tetrahydrofolate + L-serine. It participates in one-carbon metabolism; tetrahydrofolate interconversion. It functions in the pathway amino-acid biosynthesis; glycine biosynthesis; glycine from L-serine: step 1/1. In terms of biological role, catalyzes the reversible interconversion of serine and glycine with tetrahydrofolate (THF) serving as the one-carbon carrier. This reaction serves as the major source of one-carbon groups required for the biosynthesis of purines, thymidylate, methionine, and other important biomolecules. Also exhibits THF-independent aldolase activity toward beta-hydroxyamino acids, producing glycine and aldehydes, via a retro-aldol mechanism. This is Serine hydroxymethyltransferase from Acinetobacter baumannii (strain AB307-0294).